Consider the following 426-residue polypeptide: Serine--tRNA ligase (426 aa).

The interval 44-67 (TEKQALQSERNATSKQIGMLKKKG) is disordered. The segment covering 47–59 (QALQSERNATSKQ) has biased composition (polar residues). 231 to 233 (TAE) serves as a coordination point for L-serine. Residues 262 to 264 (RRE) and V278 contribute to the ATP site. E285 is an L-serine binding site. Residue 349-352 (EVSS) coordinates ATP. An L-serine-binding site is contributed by S384.

This sequence belongs to the class-II aminoacyl-tRNA synthetase family. Type-1 seryl-tRNA synthetase subfamily. As to quaternary structure, homodimer. The tRNA molecule binds across the dimer.

It is found in the cytoplasm. It catalyses the reaction tRNA(Ser) + L-serine + ATP = L-seryl-tRNA(Ser) + AMP + diphosphate + H(+). The enzyme catalyses tRNA(Sec) + L-serine + ATP = L-seryl-tRNA(Sec) + AMP + diphosphate + H(+). It participates in aminoacyl-tRNA biosynthesis; selenocysteinyl-tRNA(Sec) biosynthesis; L-seryl-tRNA(Sec) from L-serine and tRNA(Sec): step 1/1. In terms of biological role, catalyzes the attachment of serine to tRNA(Ser). Is also able to aminoacylate tRNA(Sec) with serine, to form the misacylated tRNA L-seryl-tRNA(Sec), which will be further converted into selenocysteinyl-tRNA(Sec). The sequence is that of Serine--tRNA ligase from Akkermansia muciniphila (strain ATCC BAA-835 / DSM 22959 / JCM 33894 / BCRC 81048 / CCUG 64013 / CIP 107961 / Muc).